Reading from the N-terminus, the 509-residue chain is AAA ATPase forming ring-shaped complexes (509 aa).

Residues 11–50 (AHLQRTISNLSARNAKLAELLKASRDKLSILQDQLEDLAA) are a coiled coil. 236 to 241 (GCGKTL) serves as a coordination point for ATP.

The protein belongs to the AAA ATPase family. As to quaternary structure, homohexamer. Assembles into a hexameric ring structure.

In Corynebacterium diphtheriae (strain ATCC 700971 / NCTC 13129 / Biotype gravis), this protein is AAA ATPase forming ring-shaped complexes.